Reading from the N-terminus, the 86-residue chain is Acyl carrier protein (86 aa).

In terms of domain architecture, Carrier spans 10-85; sequence DKIEQKVIEM…DVIKYIKERQ (76 aa). Serine 45 carries the post-translational modification O-(pantetheine 4'-phosphoryl)serine.

The protein belongs to the acyl carrier protein (ACP) family. 4'-phosphopantetheine is transferred from CoA to a specific serine of apo-ACP by AcpS. This modification is essential for activity because fatty acids are bound in thioester linkage to the sulfhydryl of the prosthetic group.

It localises to the cytoplasm. Its pathway is lipid metabolism; fatty acid biosynthesis. In terms of biological role, carrier of the growing fatty acid chain in fatty acid biosynthesis. This Rickettsia prowazekii (strain Madrid E) protein is Acyl carrier protein.